The chain runs to 108 residues: Transmembrane protein 141 (108 aa).

Helical transmembrane passes span 32-52 and 58-78; these read MKGV…QMFI and YPLQ…SYGV.

The protein belongs to the TMEM141 family.

Its subcellular location is the membrane. The chain is Transmembrane protein 141 (TMEM141) from Homo sapiens (Human).